The following is a 1241-amino-acid chain: ATP-dependent helicase/nuclease subunit A (1241 aa).

The 474-residue stretch at 12-485 (SQWTDDQWKA…IDLAKNFRSR (474 aa)) folds into the UvrD-like helicase ATP-binding domain. 33–40 (AAAGSGKT) contributes to the ATP binding site. The 301-residue stretch at 505–805 (GEIDYDADAE…RIMTIHKSKG (301 aa)) folds into the UvrD-like helicase C-terminal domain.

It belongs to the helicase family. AddA subfamily. As to quaternary structure, heterodimer of AddA and AddB/RexB. The cofactor is Mg(2+).

The enzyme catalyses Couples ATP hydrolysis with the unwinding of duplex DNA by translocating in the 3'-5' direction.. It carries out the reaction ATP + H2O = ADP + phosphate + H(+). Functionally, the heterodimer acts as both an ATP-dependent DNA helicase and an ATP-dependent, dual-direction single-stranded exonuclease. Recognizes the chi site generating a DNA molecule suitable for the initiation of homologous recombination. The AddA nuclease domain is required for chi fragment generation; this subunit has the helicase and 3' -&gt; 5' nuclease activities. This chain is ATP-dependent helicase/nuclease subunit A, found in Bacillus anthracis.